The chain runs to 160 residues: Transcriptional repressor NrdR (160 aa).

The span at 1 to 11 shows a compositional bias: polar residues; that stretch reads MRCPSCNSLDT. Residues 1–20 form a disordered region; sequence MRCPSCNSLDTQVKDSRPTE. The segment at 3–34 is a zinc-finger region; the sequence is CPSCNSLDTQVKDSRPTEDSAVIRRRRVCMAC. The ATP-cone domain maps to 49–139; that stretch reads LTVIKRNGRR…VYRNFREAKD (91 aa).

The protein belongs to the NrdR family. Zn(2+) serves as cofactor.

In terms of biological role, negatively regulates transcription of bacterial ribonucleotide reductase nrd genes and operons by binding to NrdR-boxes. The protein is Transcriptional repressor NrdR of Nitrobacter winogradskyi (strain ATCC 25391 / DSM 10237 / CIP 104748 / NCIMB 11846 / Nb-255).